Reading from the N-terminus, the 139-residue chain is uncharacterized protein (139 aa).

This is an uncharacterized protein from Sputnik virophage.